The sequence spans 2215 residues: Sortilin-related receptor (2215 aa).

A signal peptide spans 1 to 28 (MATRSSRRESRLPFLFALVALLPRGALG). The propeptide at 29 to 81 (GGWTQRLHGGPAPLPQDRGFFVVQGDPRDLRLGTHGDAPGASPAARKPLRTRR) is removed in mature form. Residues 59-84 (RLGTHGDAPGASPAARKPLRTRRSAA) are disordered. Residues 82 to 2138 (SAALQPQPIQ…IQAARSTDVA (2057 aa)) lie on the Lumenal side of the membrane. Asn99 carries N-linked (GlcNAc...) asparagine glycosylation. A Phosphoserine modification is found at Ser114. Residues 136-147 (YVSYDYGKSFSK) form a BNR 1 repeat. N-linked (GlcNAc...) asparagine glycosylation occurs at Asn158. The BNR 2 repeat unit spans residues 232-243 (WKSDDFGQTWIM). Asn367, Asn368, and Asn430 each carry an N-linked (GlcNAc...) asparagine glycan. BNR repeat units follow at residues 441–452 (VITFDKGGTWEF), 521–532 (YISSSAGARWRE), and 562–573 (KYSTNEGETWKT). Asn616, Asn674, Asn818, and Asn871 each carry an N-linked (GlcNAc...) asparagine glycan. 5 LDL-receptor class B repeats span residues 800–843 (NCLY…EPLS), 844–887 (QLLY…VPQE), 888–932 (GVMF…DSQW), 933–972 (IYWTDAYLDCIERITFSGQQRSVILDSLPHPYAIAVFKNE), and 973–1013 (IYWD…FYKG). The region spanning 1026 to 1072 (CSLLCLPKANNSKSCRCPEGVASSVLPSGDLMCDCPQGYQRKNNTCV) is the EGF-like domain. N-linked (GlcNAc...) asparagine glycosylation is found at Asn1035 and Asn1068. LDL-receptor class A domains lie at 1076–1114 (NTCLRNQYRCSNGNCINSIWWCDFDNDCGDMSDERNCPT), 1115–1155 (TVCD…HCEM), 1156–1194 (HQCRSDEFNCSSGMCIRSSWVCDGDNDCRDWSDEANCTA), 1198–1236 (TCEASNFQCHNGHCIPQRWACDGDADCQDGSDEDPVSCE), 1238–1272 (KCNGFHCPNGTCIPSSKHCDGLRDCPDGSDEQHCE), 1273–1317 (PFCT…GCSQ), 1323–1361 (KECDEFGFQCQNGVCISLIWKCDGMDDCGDYSDEANCEN), 1366–1405 (PNCSRYFQFHCENGHCIPNRWKCDRENDCGDWSDEKDCGD), and 1417–1455 (STCLPNYFHCSSGACVMGTWVCDGYRDCADGSDEEACPS). 21 disulfides stabilise this stretch: Cys1078/Cys1090, Cys1085/Cys1103, Cys1097/Cys1112, Cys1117/Cys1131, Cys1125/Cys1144, Cys1138/Cys1153, Cys1158/Cys1170, Cys1165/Cys1183, Cys1177/Cys1192, Cys1199/Cys1211, Cys1206/Cys1224, Cys1218/Cys1235, Cys1239/Cys1249, Cys1244/Cys1262, Cys1256/Cys1271, Cys1275/Cys1289, Cys1283/Cys1302, Cys1296/Cys1315, Cys1325/Cys1337, Cys1332/Cys1350, and Cys1344/Cys1359. An N-linked (GlcNAc...) asparagine glycan is attached at Asn1164. The N-linked (GlcNAc...) asparagine glycan is linked to Asn1191. N-linked (GlcNAc...) asparagine glycosylation occurs at Asn1246. Residue Asn1367 is glycosylated (N-linked (GlcNAc...) asparagine). Cystine bridges form between Cys1368–Cys1381, Cys1376–Cys1394, Cys1388–Cys1403, Cys1419–Cys1431, Cys1426–Cys1444, and Cys1438–Cys1453. Residue Asn1458 is glycosylated (N-linked (GlcNAc...) asparagine). LDL-receptor class A domains lie at 1469–1508 (GQCDRFEFECHQPKKCIPNWKRCDGHQDCQDGQDEANCPT) and 1512–1551 (LTCTSREFKCEDGEACIVLSERCDGFLDCSDESDEKACSD). 6 cysteine pairs are disulfide-bonded: Cys1471/Cys1484, Cys1478/Cys1497, Cys1491/Cys1506, Cys1514/Cys1527, Cys1521/Cys1540, and Cys1534/Cys1549. Fibronectin type-III domains follow at residues 1557-1649 (KVQN…TPEG), 1653-1745 (APRN…TIKG), 1747-1846 (VIQA…SPPA), 1844-1928 (PPAP…VVKM), 1935-2030 (PPRH…APDA), and 2031-2119 (LKII…LYDE). N-linked (GlcNAc...) asparagine glycosylation is found at Asn1608, Asn1706, Asn1733, Asn1810, Asn1855, Asn1895, Asn1987, Asn2011, Asn2055, Asn2070, Asn2077, and Asn2093. The helical transmembrane segment at 2139-2159 (AVVVPILFLILLSLGVGFAIL) threads the bilayer. Over 2160-2215 (YTKHRRLQSSFSAFANSHYSSRLGSAIFSSGDDLGEDDEDAPMITGFSDDVPMVIA) the chain is Cytoplasmic. The Potential nuclear localization signal for the C-terminal fragment generated by PSEN1 signature appears at 2162 to 2165 (KHRR). The Endocytosis signal signature appears at 2173-2178 (FANSHY). A required for efficient Golgi apparatus - endosome sorting region spans residues 2191 to 2215 (DDLGEDDEDAPMITGFSDDVPMVIA). The required for interaction with GGA1 and GGA2 stretch occupies residues 2202 to 2215 (MITGFSDDVPMVIA). Ser2207 carries the phosphoserine; by ROCK2 modification. Positions 2209 to 2213 (DVPMV) match the DXXLL motif involved in the interaction with GGA1 motif.

The protein belongs to the VPS10-related sortilin family. SORL1 subfamily. As to quaternary structure, after maturation cleavage, interacts (via N-terminus) with its own propeptide; this interaction prevents interaction with other ligands, including CRLF1, GDNF, GFRA1, IL6 and IL6R. Interacts (via N-terminal ectodomain) with APP, forming a 1:1 stoichiometric complex, including with isoforms APP695, APP751 and APP770; this interaction retains APP in the trans-Golgi network and reduces processing into soluble APP-alpha and amyloid-beta peptides. Also interacts with APP C-terminal fragment C99 and with Abeta40. Interacts with beta-secretase BACE1/BACE; this interaction may affect BACE1-binding to APP and hence reduce BACE1-dependent APP cleavage. Interacts with LRPAP1/RAP. Interacts (via C-terminal cytosolic domain) with GGA1 and GGA2 (via N-terminal VHS domain). Interacts with PACS1. May interact (via the N-terminal ectodomain) with the morphogenetic neuropeptide, also called head activator or HA; this interaction is impaired in the presence of propeptide. Interacts with neurotensin/NTS. Interacts (via the N-terminal ectodomain) with PDGFB homodimer. Interacts (via N-terminal ectodomain) with the uPA receptor PLAUR. Interacts with uPA/PLAU and PAI1/SERPINE1, either individually or in complex with each other, leading to endocytosis. Also interacts with PAI1/SERPINE1 in complex with tPA/PLAT. Interacts (via C-terminus) with AP-1 and AP-2 complexes. Interacts with BMPR1A and BMPR1B. Interacts with lipoprotein lipase LPL; this interaction is optimal in slightly acidic conditions. Interacts (via N-terminal ectodomain) with GDNF (via propeptide) and GDNF receptor alpha-1/GFRA1, either individually or in complex with each other. The interaction with GDNF occurs mostly intracellularly. Also interacts with other GDNF receptor alpha family members, including GFRA2, GFRA3 and GFRA4. Interacts with the insulin receptor INSR; this interaction strongly increases the surface exposure of INSR. Interacts (via cytosolic C-terminus) with STK39/SPAK. Interacts (via N-terminal ectodomain) with the heterodimeric complex CRLF1-CLC; within this complex, the interaction is mediated predominantly by the CRLF1 moiety. Interacts with CNTFR, as well as with the tripartite signaling complex formed by CRLF1, CLC and CNTFR. Interacts (via N-terminal ectodomain) with IL6; this interaction leads to IL6 internalization and lysosomal degradation. Binding of SOLRL1 secreted N-terminal ectodomain to IL6 may increase IL6 trans signaling. Interacts with secreted IL6R; this interaction leads to IL6R internalization. Also interacts with transmembrane IL6R; this interaction does not affect subcellular location. Interacts with APOE. Interacts with apolipoprotein E-rich beta-VLDL. Interacts with APOA5; this interaction leads to APOA5 internalization and is abolished by heparin. Interaction with APOA5 results in enhanced binding to chylomicrons. Interacts with ROCK2. Interacts (via cytosolic C-terminus) with PPP3CB/calcineurin A beta. Interacts with NTRK2/TRKB; this interaction facilitates NTRK2 trafficking between synaptic plasma membranes, postsynaptic densities and cell soma, hence positively regulates BDNF signaling. Interacts (via cytosolic C-terminus) with HSPA12A in an ADP-dependent manner; this interaction affects SORL1 internalization and subcellular localization. Interacts (via N-terminal ectodomain) with ERBB2/HER2. Within the Golgi apparatus, the propeptide may be cleaved off by FURIN or a furin-like protease. After cleavage, the propeptide interacts with the mature protein N-terminus, preventing the association with other ligands. At the cell surface, partially subjected to proteolytic shedding that releases the ectodomain in the extracellular milieu. The shedding may be catalyzed by ADAM17/TACE. Following shedding, PSEN1/presenilin-1 cleaves the remaining transmembrane fragment and catalyzes the release of a C-terminal fragment in the cytosol and of a soluble N-terminal beta fragment in the extracellular milieu. The C-terminal cytosolic fragment localizes to the nucleus. In terms of processing, phosphorylation at Ser-2207 facilitates the interaction with GGA1. Highly expressed in the central nervous system, including in the brain and spinal cord, in neurons, as well as in glial cells (at protein level). In the brain, mainly expressed in the cerebellum, hippocampus, dentate gyrus, hypothalamus, and in the cerebral cortex (at protein level). Also detected in kidney, heart, lung and spleen. In the kidney, expressed in epithelial cells in the thick ascending limb of Henle's loop, the distal convoluted tubule, the connecting tubule and the cortical collecting duct (at protein level). Expressed in skeletal muscle (at protein level). Expressed in adipose tissue, including in brown adipose tissue and subcutaneous white adipose tissue. Expressed in intimal smooth muscle cells (at protein level).

It localises to the golgi apparatus membrane. The protein localises to the golgi apparatus. Its subcellular location is the trans-Golgi network membrane. The protein resides in the endosome membrane. It is found in the early endosome membrane. It localises to the recycling endosome membrane. The protein localises to the endoplasmic reticulum membrane. Its subcellular location is the endosome. The protein resides in the multivesicular body membrane. It is found in the cell membrane. It localises to the cytoplasmic vesicle. The protein localises to the secretory vesicle membrane. Its subcellular location is the secreted. In terms of biological role, sorting receptor that directs several proteins to their correct location within the cell. Along with AP-1 complex, involved Golgi apparatus - endosome sorting. Sorting receptor for APP, regulating its intracellular trafficking and processing into amyloidogenic-beta peptides. Retains APP in the trans-Golgi network, hence preventing its transit through late endosomes where amyloid beta peptides Abeta40 and Abeta42 are generated. May also sort newly produced amyloid-beta peptides to lysosomes for catabolism. Does not affect APP trafficking from the endoplasmic reticulum to Golgi compartments. Sorting receptor for the BDNF receptor NTRK2/TRKB that facilitates NTRK2 trafficking between synaptic plasma membranes, postsynaptic densities and cell soma, hence positively regulates BDNF signaling by controlling the intracellular location of its receptor. Sorting receptor for GDNF that promotes GDNF regulated, but not constitutive secretion. Sorting receptor for the GDNF-GFRA1 complex, directing it from the cell surface to endosomes. GDNF is then targeted to lysosomes and degraded, while its receptor GFRA1 recycles back to the cell membrane, resulting in a GDNF clearance pathway. The SORL1-GFRA1 complex further targets RET for endocytosis, but not for degradation, affecting GDNF-induced neurotrophic activities. Sorting receptor for ERBB2/HER2. Regulates ERBB2 subcellular distribution by promoting its recycling after internalization from endosomes back to the plasma membrane, hence stimulating phosphoinositide 3-kinase (PI3K)-dependent ERBB2 signaling. Sorting receptor for lipoprotein lipase LPL. Promotes LPL localization to endosomes and later to the lysosomes, leading to degradation of newly synthesized LPL. Potential sorting receptor for APOA5, inducing APOA5 internalization to early endosomes, then to late endosomes, wherefrom a portion is sent to lysosomes and degradation, another portion is sorted to the trans-Golgi network. Sorting receptor for the insulin receptor INSR. Promotes recycling of internalized INSR via the Golgi apparatus back to the cell surface, thereby preventing lysosomal INSR catabolism, increasing INSR cell surface expression and strengthening insulin signal reception in adipose tissue. Does not affect INSR internalization. Plays a role in renal ion homeostasis, controlling the phospho-regulation of SLC12A1/NKCC2 by STK39/SPAK kinase and PPP3CB/calcineurin A beta phosphatase, possibly through intracellular sorting of STK39 and PPP3CB. Stimulates, via the N-terminal ectodomain, the proliferation and migration of smooth muscle cells, possibly by increasing cell surface expression of the urokinase receptor uPAR/PLAUR. This may promote extracellular matrix proteolysis and hence facilitate cell migration. By acting on the migration of intimal smooth muscle cells, may accelerate intimal thickening following vascular injury. Promotes adhesion of monocytes. Stimulates proliferation and migration of monocytes/macrophages. Through its action on intimal smooth muscle cells and macrophages, may accelerate intimal thickening and macrophage foam cell formation in the process of atherosclerosis. Regulates hypoxia-enhanced adhesion of hematopoietic stem and progenitor cells to the bone marrow stromal cells via a PLAUR-mediated pathway. This function is mediated by the N-terminal ectodomain. Metabolic regulator, which functions to maintain the adequate balance between lipid storage and oxidation in response to changing environmental conditions, such as temperature and diet. The N-terminal ectodomain negatively regulates adipose tissue energy expenditure, acting through the inhibition the BMP/Smad pathway. May regulate signaling by the heterodimeric neurotrophic cytokine CLCF1-CRLF1 bound to the CNTFR receptor by promoting the endocytosis of the tripartite complex CLCF1-CRLF1-CNTFR and lysosomal degradation. May regulate IL6 signaling, decreasing cis signaling, possibly by interfering with IL6-binding to membrane-bound IL6R, while up-regulating trans signaling via soluble IL6R. This chain is Sortilin-related receptor (Sorl1), found in Mus musculus (Mouse).